The chain runs to 126 residues: Fluoride-specific ion channel FluC (126 aa).

4 helical membrane passes run 4–24 (SILA…FLGI), 35–55 (LGTF…VAGF), 68–88 (FVIT…AEVV), and 103–123 (IVIH…TVSL). The Na(+) site is built by Gly-75 and Ser-78.

Belongs to the fluoride channel Fluc/FEX (TC 1.A.43) family.

The protein localises to the cell inner membrane. It catalyses the reaction fluoride(in) = fluoride(out). With respect to regulation, na(+) is not transported, but it plays an essential structural role and its presence is essential for fluoride channel function. Its function is as follows. Fluoride-specific ion channel. Important for reducing fluoride concentration in the cell, thus reducing its toxicity. The protein is Fluoride-specific ion channel FluC of Paraburkholderia xenovorans (strain LB400).